Reading from the N-terminus, the 544-residue chain is Calcium-dependent protein kinase 6 (544 aa).

The tract at residues 1–47 (MGNSCRGSFKDKIYEGNHSRPEENSKSTTTTVSSVHSPTTDQDFSKQ) is disordered. Residue G2 is the site of N-myristoyl glycine attachment. Residues 8-25 (SFKDKIYEGNHSRPEENS) are compositionally biased toward basic and acidic residues. Over residues 26–40 (KSTTTTVSSVHSPTT) the composition is skewed to low complexity. Positions 85–343 (YTLSRKLGQG…AHEVLRHPWI (259 aa)) constitute a Protein kinase domain. ATP is bound by residues 91–99 (LGQGQFGTT) and K114. D209 functions as the Proton acceptor in the catalytic mechanism. A Phosphoserine modification is found at S249. The segment at 349-379 (APDRALDPAVLSRLKQFSAMNKLKKMALKVI) is autoinhibitory domain. EF-hand domains follow at residues 386–421 (EEIA…YGST), 422–457 (LKDT…LNKL), 458–493 (EREE…HGMT), and 497–527 (LEDI…GNAG). Ca(2+) is bound by residues D399, D401, S403, E410, D435, D437, S439, T441, E446, D471, D473, S475, Y477, E482, D505, D507, D509, R511, and E516.

This sequence belongs to the protein kinase superfamily. Ser/Thr protein kinase family. CDPK subfamily. As to quaternary structure, interacts with SLAC1. Interacts with FD. As to expression, expressed in both guard cells and mesophyll cells. Expressed in the shoot apical meristem.

The protein localises to the cell membrane. It is found in the nucleus. It catalyses the reaction L-seryl-[protein] + ATP = O-phospho-L-seryl-[protein] + ADP + H(+). The catalysed reaction is L-threonyl-[protein] + ATP = O-phospho-L-threonyl-[protein] + ADP + H(+). With respect to regulation, activated by calcium. Autophosphorylation may play an important role in the regulation of the kinase activity. Functionally, may play a role in signal transduction pathways that involve calcium as a second messenger. Functions in abscisic acid (ABA) regulation of guard cell S-type anion- and Ca(2+)-permeable channels and stomatal closure. Phosphorylates FD. This Arabidopsis thaliana (Mouse-ear cress) protein is Calcium-dependent protein kinase 6 (CPK6).